Reading from the N-terminus, the 366-residue chain is Eukaryotic translation initiation factor 3 subunit H (366 aa).

Positions Val12–Phe161 constitute an MPN domain.

Belongs to the eIF-3 subunit H family. As to quaternary structure, component of the eukaryotic translation initiation factor 3 (eIF-3) complex.

It localises to the cytoplasm. In terms of biological role, component of the eukaryotic translation initiation factor 3 (eIF-3) complex, which is involved in protein synthesis of a specialized repertoire of mRNAs and, together with other initiation factors, stimulates binding of mRNA and methionyl-tRNAi to the 40S ribosome. The eIF-3 complex specifically targets and initiates translation of a subset of mRNAs involved in cell proliferation. The chain is Eukaryotic translation initiation factor 3 subunit H from Emericella nidulans (strain FGSC A4 / ATCC 38163 / CBS 112.46 / NRRL 194 / M139) (Aspergillus nidulans).